The following is a 227-amino-acid chain: Cytochrome c oxidase subunit 2 (227 aa).

Topologically, residues 1 to 14 (MAYPFQLGLQDATS) are mitochondrial intermembrane. Residues 15-45 (PIMEELLHFHDHTLMIVFLISSLVLYIISLM) traverse the membrane as a helical segment. At 46 to 59 (LTTKLTHTSTMDAQ) the chain is on the mitochondrial matrix side. The helical transmembrane segment at 60 to 87 (EVETVWTILPAIILILIALPSLRILYMM) threads the bilayer. Over 88-227 (DEINNPSLTV…YFEAWSALMV (140 aa)) the chain is Mitochondrial intermembrane. The Cu cation site is built by H161, C196, E198, C200, H204, and M207. Position 198 (E198) interacts with Mg(2+). Phosphotyrosine is present on Y218.

It belongs to the cytochrome c oxidase subunit 2 family. Component of the cytochrome c oxidase (complex IV, CIV), a multisubunit enzyme composed of 14 subunits. The complex is composed of a catalytic core of 3 subunits MT-CO1, MT-CO2 and MT-CO3, encoded in the mitochondrial DNA, and 11 supernumerary subunits COX4I, COX5A, COX5B, COX6A, COX6B, COX6C, COX7A, COX7B, COX7C, COX8 and NDUFA4, which are encoded in the nuclear genome. The complex exists as a monomer or a dimer and forms supercomplexes (SCs) in the inner mitochondrial membrane with NADH-ubiquinone oxidoreductase (complex I, CI) and ubiquinol-cytochrome c oxidoreductase (cytochrome b-c1 complex, complex III, CIII), resulting in different assemblies (supercomplex SCI(1)III(2)IV(1) and megacomplex MCI(2)III(2)IV(2)). Found in a complex with TMEM177, COA6, COX18, COX20, SCO1 and SCO2. Interacts with TMEM177 in a COX20-dependent manner. Interacts with COX20. Interacts with COX16. It depends on Cu cation as a cofactor.

It localises to the mitochondrion inner membrane. The enzyme catalyses 4 Fe(II)-[cytochrome c] + O2 + 8 H(+)(in) = 4 Fe(III)-[cytochrome c] + 2 H2O + 4 H(+)(out). Component of the cytochrome c oxidase, the last enzyme in the mitochondrial electron transport chain which drives oxidative phosphorylation. The respiratory chain contains 3 multisubunit complexes succinate dehydrogenase (complex II, CII), ubiquinol-cytochrome c oxidoreductase (cytochrome b-c1 complex, complex III, CIII) and cytochrome c oxidase (complex IV, CIV), that cooperate to transfer electrons derived from NADH and succinate to molecular oxygen, creating an electrochemical gradient over the inner membrane that drives transmembrane transport and the ATP synthase. Cytochrome c oxidase is the component of the respiratory chain that catalyzes the reduction of oxygen to water. Electrons originating from reduced cytochrome c in the intermembrane space (IMS) are transferred via the dinuclear copper A center (CU(A)) of subunit 2 and heme A of subunit 1 to the active site in subunit 1, a binuclear center (BNC) formed by heme A3 and copper B (CU(B)). The BNC reduces molecular oxygen to 2 water molecules using 4 electrons from cytochrome c in the IMS and 4 protons from the mitochondrial matrix. The polypeptide is Cytochrome c oxidase subunit 2 (MT-CO2) (Cuon alpinus (Dhole)).